Here is a 517-residue protein sequence, read N- to C-terminus: Gamma-1-syntrophin (517 aa).

The region spanning 57–140 is the PDZ domain; that stretch reads TVTIRRQTVG…EVTLTVSFLK (84 aa). Residues 283–390 enclose the PH domain; sequence QIVYMGWCEA…WERAFQTATF (108 aa).

The protein belongs to the syntrophin family. Isoform 1, but not isoform 2, interacts with the dystrophin protein DMD and related proteins DTNA and DTNB. Interacts with DGKZ. In terms of tissue distribution, brain specific. In CNS, it is expressed in the perikaryon and proximal portion of the neuronal processes. Strong expression in the hippocampus, neuron-rich dendate granule cells, and pyramidal cell layers. Highly expressed in neurons of the cerebral cortex. Also expressed in the cerebellar cortex, deep cerebellar nuclei, thalamus, and basal ganglia. No expression in muscle cells.

Its subcellular location is the cytoplasm. It is found in the cytoskeleton. The protein localises to the nucleus. Functionally, adapter protein that binds to and probably organizes the subcellular localization of a variety of proteins. May link various receptors to the actin cytoskeleton and the dystrophin glycoprotein complex. May participate in regulating the subcellular location of diacylglycerol kinase-zeta to ensure that diacylglycerol is rapidly inactivated following receptor activation. This chain is Gamma-1-syntrophin (SNTG1), found in Homo sapiens (Human).